Here is a 360-residue protein sequence, read N- to C-terminus: Peptide chain release factor 1 (360 aa).

An N5-methylglutamine modification is found at Q235. A compositionally biased stretch (basic and acidic residues) spans 280–293 (DKQSHEQQAKEAAT). The segment at 280–300 (DKQSHEQQAKEAATRKSLIGS) is disordered.

It belongs to the prokaryotic/mitochondrial release factor family. In terms of processing, methylated by PrmC. Methylation increases the termination efficiency of RF1.

Its subcellular location is the cytoplasm. In terms of biological role, peptide chain release factor 1 directs the termination of translation in response to the peptide chain termination codons UAG and UAA. The chain is Peptide chain release factor 1 from Paraburkholderia xenovorans (strain LB400).